A 268-amino-acid polypeptide reads, in one-letter code: Uronate dehydrogenase (268 aa).

NAD(+)-binding positions include glycine 17–leucine 18, aspartate 37–serine 39, aspartate 55–leucine 56, and phenylalanine 75–serine 79. Substrate-binding positions include serine 79 and serine 115 to histidine 117. Tyrosine 140 serves as the catalytic Proton acceptor. Lysine 144 contacts NAD(+). Residue serine 169 participates in substrate binding. Position 170 (serine 170) interacts with NAD(+). Residue arginine 178 coordinates substrate.

It belongs to the NAD(P)-dependent epimerase/dehydratase family. As to quaternary structure, homohexamer.

It catalyses the reaction beta-D-galacturonate + NAD(+) = D-galactaro-1,5-lactone + NADH + H(+). The enzyme catalyses beta-D-glucuronate + NAD(+) = D-glucaro-1,5-lactone + NADH + H(+). It participates in carbohydrate acid metabolism; D-galacturonate degradation via prokaryotic oxidative pathway. Catalyzes the oxidation of beta-D-galacturonate and beta-D-glucuronate to galactarate and D-glucarate, respectively. This is Uronate dehydrogenase (udh) from Pseudomonas putida (strain ATCC 47054 / DSM 6125 / CFBP 8728 / NCIMB 11950 / KT2440).